The sequence spans 322 residues: Ferrochelatase (322 aa).

Fe cation contacts are provided by H194 and E275.

This sequence belongs to the ferrochelatase family.

The protein resides in the cytoplasm. The catalysed reaction is heme b + 2 H(+) = protoporphyrin IX + Fe(2+). The protein operates within porphyrin-containing compound metabolism; protoheme biosynthesis; protoheme from protoporphyrin-IX: step 1/1. Functionally, catalyzes the ferrous insertion into protoporphyrin IX. In Yersinia enterocolitica serotype O:8 / biotype 1B (strain NCTC 13174 / 8081), this protein is Ferrochelatase.